The following is a 181-amino-acid chain: Probable pyruvoyl-dependent arginine decarboxylase (181 aa).

S43 is subject to Pyruvic acid (Ser).

The protein belongs to the PdaD family. Requires pyruvate as cofactor.

The catalysed reaction is L-arginine + H(+) = agmatine + CO2. In Chlorobium luteolum (strain DSM 273 / BCRC 81028 / 2530) (Pelodictyon luteolum), this protein is Probable pyruvoyl-dependent arginine decarboxylase.